A 1058-amino-acid chain; its full sequence is Carbamoyl phosphate synthase large chain (1058 aa).

The carboxyphosphate synthetic domain stretch occupies residues 1-401 (MPKRTDIQKI…SLLKACRSLE (401 aa)). ATP contacts are provided by Arg-129, Arg-169, Gly-175, Gly-176, Arg-208, Ile-210, Glu-215, Gly-241, Ile-242, His-243, Gln-284, and Glu-298. In terms of domain architecture, ATP-grasp 1 spans 133 to 327 (KQLMEELEQP…IAKLAAKIAV (195 aa)). 3 residues coordinate Mg(2+): Gln-284, Glu-298, and Asn-300. Positions 284, 298, and 300 each coordinate Mn(2+). The segment at 402–546 (IGVHHNEIPE…YSTYGWENES (145 aa)) is oligomerization domain. Residues 547–929 (IRSDKESVLV…ALYKAFEASY (383 aa)) are carbamoyl phosphate synthetic domain. The region spanning 671-861 (EQALKELDIP…MAQVATKLIL (191 aa)) is the ATP-grasp 2 domain. 10 residues coordinate ATP: Arg-707, Ser-746, Ile-748, Glu-752, Gly-777, Val-778, His-779, Ser-780, Gln-820, and Glu-832. Mg(2+) contacts are provided by Gln-820, Glu-832, and Asn-834. Mn(2+) contacts are provided by Gln-820, Glu-832, and Asn-834. An MGS-like domain is found at 930–1058 (LHLPTFGNVV…ESRSFVTEAI (129 aa)). Positions 930–1058 (LHLPTFGNVV…ESRSFVTEAI (129 aa)) are allosteric domain.

It belongs to the CarB family. Composed of two chains; the small (or glutamine) chain promotes the hydrolysis of glutamine to ammonia, which is used by the large (or ammonia) chain to synthesize carbamoyl phosphate. Tetramer of heterodimers (alpha,beta)4. The cofactor is Mg(2+). Mn(2+) serves as cofactor.

It carries out the reaction hydrogencarbonate + L-glutamine + 2 ATP + H2O = carbamoyl phosphate + L-glutamate + 2 ADP + phosphate + 2 H(+). The catalysed reaction is hydrogencarbonate + NH4(+) + 2 ATP = carbamoyl phosphate + 2 ADP + phosphate + 2 H(+). It participates in amino-acid biosynthesis; L-arginine biosynthesis; carbamoyl phosphate from bicarbonate: step 1/1. The protein operates within pyrimidine metabolism; UMP biosynthesis via de novo pathway; (S)-dihydroorotate from bicarbonate: step 1/3. In terms of biological role, large subunit of the glutamine-dependent carbamoyl phosphate synthetase (CPSase). CPSase catalyzes the formation of carbamoyl phosphate from the ammonia moiety of glutamine, carbonate, and phosphate donated by ATP, constituting the first step of 2 biosynthetic pathways, one leading to arginine and/or urea and the other to pyrimidine nucleotides. The large subunit (synthetase) binds the substrates ammonia (free or transferred from glutamine from the small subunit), hydrogencarbonate and ATP and carries out an ATP-coupled ligase reaction, activating hydrogencarbonate by forming carboxy phosphate which reacts with ammonia to form carbamoyl phosphate. The polypeptide is Carbamoyl phosphate synthase large chain (Streptococcus pneumoniae (strain JJA)).